The following is a 337-amino-acid chain: Basic membrane protein A2 (337 aa).

The first 17 residues, 1-17, serve as a signal peptide directing secretion; sequence MNKLLLLILFECIIFLS. Residue C18 is the site of N-palmitoyl cysteine attachment. The S-diacylglycerol cysteine moiety is linked to residue C18.

It belongs to the BMP lipoprotein family. Monomer.

It is found in the cell inner membrane. Functionally, immunogenic protein. May be part of an ABC-type nucleoside uptake system involved in the purine salvage pathway. The chain is Basic membrane protein A2 (bmpA2) from Borrelia garinii subsp. bavariensis (strain ATCC BAA-2496 / DSM 23469 / PBi) (Borreliella bavariensis).